The following is a 277-amino-acid chain: Shikimate dehydrogenase (NADP(+)) (277 aa).

Shikimate-binding positions include 15–17 and Thr-62; that span reads SLS. Lys-66 serves as the catalytic Proton acceptor. Residues Asn-87 and Asp-102 each coordinate shikimate. NADP(+) contacts are provided by residues 127–131, 151–156, and Ile-219; these read GAGGA and NRTVSK. Tyr-221 serves as a coordination point for shikimate. Residue Gly-242 participates in NADP(+) binding.

The protein belongs to the shikimate dehydrogenase family. In terms of assembly, homodimer.

It catalyses the reaction shikimate + NADP(+) = 3-dehydroshikimate + NADPH + H(+). It participates in metabolic intermediate biosynthesis; chorismate biosynthesis; chorismate from D-erythrose 4-phosphate and phosphoenolpyruvate: step 4/7. Functionally, involved in the biosynthesis of the chorismate, which leads to the biosynthesis of aromatic amino acids. Catalyzes the reversible NADPH linked reduction of 3-dehydroshikimate (DHSA) to yield shikimate (SA). The sequence is that of Shikimate dehydrogenase (NADP(+)) from Geobacillus sp. (strain WCH70).